The primary structure comprises 220 residues: Protein DGCR6L (220 aa).

Residues 76 to 159 (KSLYNQRLRL…ADQQSTLEKA (84 aa)) adopt a coiled-coil conformation.

Belongs to the gonadal family. Widely expressed in fetal and adult tissues. Highest expression in liver, heart and skeletal muscle. Lower levels in pancreas and placenta. Weak expression in brain.

It localises to the nucleus. Functionally, may play a role in neural crest cell migration into the third and fourth pharyngeal pouches. This is Protein DGCR6L (DGCR6L) from Homo sapiens (Human).